A 138-amino-acid chain; its full sequence is Large ribosomal subunit protein uL16 (138 aa).

A compositionally biased stretch (basic residues) spans 1–19 (MLIPKRVKYRRQHRPHRSG). Residues 1–24 (MLIPKRVKYRRQHRPHRSGVSKGG) are disordered.

The protein belongs to the universal ribosomal protein uL16 family. As to quaternary structure, part of the 50S ribosomal subunit.

In terms of biological role, binds 23S rRNA and is also seen to make contacts with the A and possibly P site tRNAs. This chain is Large ribosomal subunit protein uL16, found in Corynebacterium jeikeium (strain K411).